Here is a 374-residue protein sequence, read N- to C-terminus: F-box/kelch-repeat protein At2g24250 (374 aa).

One can recognise an F-box domain in the interval 14 to 63; sequence PDWSQLPEELLHIISTHLEDHYFDAVHARSVCRSWRSTFPFPSSLLRQSY. Kelch repeat units lie at residues 100 to 150 and 249 to 301; these read SEYF…PLGH and NFLV…LGNF.

The polypeptide is F-box/kelch-repeat protein At2g24250 (Arabidopsis thaliana (Mouse-ear cress)).